The primary structure comprises 329 residues: Cytosolic arginine sensor for mTORC1 subunit 2 (329 aa).

ACT domains are found at residues 72–140 (ADAT…HTLS) and 262–322 (ELWK…SALK).

This sequence belongs to the GATS family. As to quaternary structure, forms homodimers and heterodimers with CASTOR1. Interacts with the GATOR2 complex which is composed of MIOS, SEC13, SEH1L, WDR24 and WDR59; the interaction is not regulated by arginine. Widely expressed.

It localises to the cytoplasm. Its subcellular location is the cytosol. Functions as a negative regulator of the TORC1 signaling pathway through the GATOR complex. As part of homodimers or heterodimers with CASTOR1, directly binds and inhibits the GATOR subcomplex GATOR2 and thereby mTORC1. Does not directly bind arginine, but binding of arginine to CASTOR1 disrupts the interaction of CASTOR2-containing heterodimers with GATOR2 which can in turn activate mTORC1 and the TORC1 signaling pathway. In Homo sapiens (Human), this protein is Cytosolic arginine sensor for mTORC1 subunit 2.